Reading from the N-terminus, the 214-residue chain is Galactokinase (214 aa).

Arginine 47, aspartate 53, histidine 54, and aspartate 56 together coordinate alpha-D-galactose. Glycine 149, glycine 151, serine 153, and serine 154 together coordinate ATP. Aspartate 199 contributes to the alpha-D-galactose binding site. Aspartate 199 functions as the Proton acceptor in the catalytic mechanism.

The protein belongs to the GHMP kinase family. GalK subfamily.

The enzyme catalyses alpha-D-galactose + ATP = alpha-D-galactose 1-phosphate + ADP + H(+). It functions in the pathway carbohydrate metabolism; galactose metabolism. Galactokinase is a key enzyme in the galactose metabolism where it catalyzes the conversion of alpha-D-galactose to galactose 1-phosphate. Can also induce the transcription of the gal genes in response to the organism being challenged with galactose as the sole source of carbon. The sequence is that of Galactokinase from Candida maltosa (Yeast).